The following is a 387-amino-acid chain: Succinate--CoA ligase [ADP-forming] subunit beta (387 aa).

In terms of domain architecture, ATP-grasp spans 9–244; the sequence is KHILSKFGVN…YDEEIKEEIE (236 aa). Residues K46, 53–55, E99, C102, and E107 each bind ATP; that span reads GRG. The Mg(2+) site is built by N199 and D213. Substrate contacts are provided by residues N264 and 321–323; that span reads GIM.

The protein belongs to the succinate/malate CoA ligase beta subunit family. Heterotetramer of two alpha and two beta subunits. It depends on Mg(2+) as a cofactor.

It catalyses the reaction succinate + ATP + CoA = succinyl-CoA + ADP + phosphate. It carries out the reaction GTP + succinate + CoA = succinyl-CoA + GDP + phosphate. Its pathway is carbohydrate metabolism; tricarboxylic acid cycle; succinate from succinyl-CoA (ligase route): step 1/1. Functionally, succinyl-CoA synthetase functions in the citric acid cycle (TCA), coupling the hydrolysis of succinyl-CoA to the synthesis of either ATP or GTP and thus represents the only step of substrate-level phosphorylation in the TCA. The beta subunit provides nucleotide specificity of the enzyme and binds the substrate succinate, while the binding sites for coenzyme A and phosphate are found in the alpha subunit. In Ehrlichia chaffeensis (strain ATCC CRL-10679 / Arkansas), this protein is Succinate--CoA ligase [ADP-forming] subunit beta.